A 138-amino-acid chain; its full sequence is Transcription antitermination protein NusB (138 aa).

Belongs to the NusB family.

Functionally, involved in transcription antitermination. Required for transcription of ribosomal RNA (rRNA) genes. Binds specifically to the boxA antiterminator sequence of the ribosomal RNA (rrn) operons. This chain is Transcription antitermination protein NusB, found in Serratia proteamaculans (strain 568).